The primary structure comprises 406 residues: 4-hydroxy-3-methylbut-2-en-1-yl diphosphate synthase (ferredoxin) (406 aa).

Residues Cys-315, Cys-318, Cys-349, and Glu-356 each coordinate [4Fe-4S] cluster.

This sequence belongs to the IspG family. [4Fe-4S] cluster serves as cofactor.

The catalysed reaction is (2E)-4-hydroxy-3-methylbut-2-enyl diphosphate + 2 oxidized [2Fe-2S]-[ferredoxin] + H2O = 2-C-methyl-D-erythritol 2,4-cyclic diphosphate + 2 reduced [2Fe-2S]-[ferredoxin] + H(+). It participates in isoprenoid biosynthesis; isopentenyl diphosphate biosynthesis via DXP pathway; isopentenyl diphosphate from 1-deoxy-D-xylulose 5-phosphate: step 5/6. Functionally, converts 2C-methyl-D-erythritol 2,4-cyclodiphosphate (ME-2,4cPP) into 1-hydroxy-2-methyl-2-(E)-butenyl 4-diphosphate. The chain is 4-hydroxy-3-methylbut-2-en-1-yl diphosphate synthase (ferredoxin) from Microcystis aeruginosa (strain NIES-843 / IAM M-2473).